Reading from the N-terminus, the 159-residue chain is Ribosomal RNA large subunit methyltransferase H (159 aa).

L76 and G108 together coordinate S-adenosyl-L-methionine.

It belongs to the RNA methyltransferase RlmH family. As to quaternary structure, homodimer.

It localises to the cytoplasm. It carries out the reaction pseudouridine(1915) in 23S rRNA + S-adenosyl-L-methionine = N(3)-methylpseudouridine(1915) in 23S rRNA + S-adenosyl-L-homocysteine + H(+). In terms of biological role, specifically methylates the pseudouridine at position 1915 (m3Psi1915) in 23S rRNA. This chain is Ribosomal RNA large subunit methyltransferase H, found in Ligilactobacillus salivarius (strain UCC118) (Lactobacillus salivarius).